The primary structure comprises 217 residues: LSM12 homolog A (217 aa).

In terms of domain architecture, Sm spans 9-78 (VNAVNDCFSI…CSNVQVIKEC (70 aa)). In terms of domain architecture, AD spans 86–184 (QKLNLEQVKM…IIKQFFNTRP (99 aa)). Residues 185–217 (SPVPESGAAASTSSPSVSPTSSSLASGSPVPAN) form a disordered region. Residues 190 to 217 (SGAAASTSSPSVSPTSSSLASGSPVPAN) show a composition bias toward low complexity.

Belongs to the LSM12 family. Component of the Atx2-tyf activator complex, composed of Atx2, tyf, pAbp, Lsm12a. Interacts with tyf, Atx2 and pAbp.

Component of the Atx2-tyf activator complex which functions in the circadian pacemaker neurons to activate the TYF-dependent translation of per and maintain 24 hour periodicity in circadian behaviors. Within the Atx2-tyf complex, likely to function as a molecular adapter which stabilizes the interaction between Atx2 and the translational regulator tyf. The protein is LSM12 homolog A of Drosophila melanogaster (Fruit fly).